The sequence spans 358 residues: Type II restriction enzyme SacI (358 aa).

The enzyme catalyses Endonucleolytic cleavage of DNA to give specific double-stranded fragments with terminal 5'-phosphates.. Functionally, a subtype P restriction enzyme that recognizes the double-stranded sequence 5'-GAGCTC-3' and cleaves after T-5. In Streptomyces achromogenes, this protein is Type II restriction enzyme SacI.